Here is a 158-residue protein sequence, read N- to C-terminus: Large ribosomal subunit protein uL16 (158 aa).

It belongs to the universal ribosomal protein uL16 family. As to quaternary structure, part of the 50S ribosomal subunit.

In terms of biological role, binds 23S rRNA and is also seen to make contacts with the A and possibly P site tRNAs. This chain is Large ribosomal subunit protein uL16, found in Prochlorococcus marinus (strain MIT 9303).